Reading from the N-terminus, the 428-residue chain is Glutamate-1-semialdehyde 2,1-aminomutase (428 aa).

Lys-265 carries the post-translational modification N6-(pyridoxal phosphate)lysine.

The protein belongs to the class-III pyridoxal-phosphate-dependent aminotransferase family. HemL subfamily. As to quaternary structure, homodimer. It depends on pyridoxal 5'-phosphate as a cofactor.

The protein localises to the cytoplasm. The enzyme catalyses (S)-4-amino-5-oxopentanoate = 5-aminolevulinate. Its pathway is porphyrin-containing compound metabolism; protoporphyrin-IX biosynthesis; 5-aminolevulinate from L-glutamyl-tRNA(Glu): step 2/2. The polypeptide is Glutamate-1-semialdehyde 2,1-aminomutase (Methylobacillus flagellatus (strain ATCC 51484 / DSM 6875 / VKM B-1610 / KT)).